Here is a 545-residue protein sequence, read N- to C-terminus: MGTSSPEMAAALLLVMAALAGVAAGGDIVHQDDEAPKIPGCSNDFVLVKVQTWVNNREDGEFVGVGARFGPTIESKEKHANRTGLLLADPIDCCDPPTQKVAGDVLLVQRGNCKFTKKAKNAEAAGASAIIIINHVHELYKMVCDRNETDLDINIPAVLLPKDAGNDLQKLLTRGKVSVQLYSPDRPLVDTAEVFLWLMAVGTILCASYWSAWSAREAVIEQEKLLKDGHESSLNLEAGGSSGMVDINMTSAILFVVIASCFLIMLYKLMSHWFVELLVVIFCIGGVEGLQTCLVALLSRWFKPAAESFVKVPFFGAVSYLTIAVCPFCIVFAVIWAVYRRMTYAWIGQDILGIALIVTVIQIVRIPNLKVGSVLLSCSFLYDIFWVFISKMWFHESVMIVVARGDKTDEDGVPMLLKIPRMFDPWGGFSIIGFGDILLPGLLIAFALRYDWAAKKTLQSGYFLWSMVAYGSGLMITYVALNLMDGHGQPALLYIVPFTLGTFIALGRKRGELRNLWTRGQPERVCTHMHMQPSPKDTNCDAVSS.

Residues 1–25 (MGTSSPEMAAALLLVMAALAGVAAG) form the signal peptide. Topologically, residues 26 to 193 (GDIVHQDDEA…PDRPLVDTAE (168 aa)) are lumenal. Residues Asn-81 and Asn-147 are each glycosylated (N-linked (GlcNAc...) asparagine). The PA domain occupies 90–170 (PIDCCDPPTQ…PKDAGNDLQK (81 aa)). A helical membrane pass occupies residues 194-214 (VFLWLMAVGTILCASYWSAWS). Residues 215–246 (AREAVIEQEKLLKDGHESSLNLEAGGSSGMVD) lie on the Cytoplasmic side of the membrane. The helical transmembrane segment at 247–267 (INMTSAILFVVIASCFLIMLY) threads the bilayer. Over 268–276 (KLMSHWFVE) the chain is Lumenal. A helical transmembrane segment spans residues 277-297 (LLVVIFCIGGVEGLQTCLVAL). Topologically, residues 298–317 (LSRWFKPAAESFVKVPFFGA) are cytoplasmic. Residues 318–338 (VSYLTIAVCPFCIVFAVIWAV) form a helical membrane-spanning segment. Over 339 to 343 (YRRMT) the chain is Lumenal. A helical membrane pass occupies residues 344 to 364 (YAWIGQDILGIALIVTVIQIV). Topologically, residues 365–373 (RIPNLKVGS) are cytoplasmic. Residues 374–394 (VLLSCSFLYDIFWVFISKMWF) traverse the membrane as a helical segment. Asp-383 is a catalytic residue. The Lumenal segment spans residues 395–427 (HESVMIVVARGDKTDEDGVPMLLKIPRMFDPWG). The chain crosses the membrane as a helical span at residues 428–448 (GFSIIGFGDILLPGLLIAFAL). Asp-436 is an active-site residue. The Cytoplasmic segment spans residues 449–460 (RYDWAAKKTLQS). Residues 461-481 (GYFLWSMVAYGSGLMITYVAL) traverse the membrane as a helical segment. The Lumenal portion of the chain corresponds to 482-485 (NLMD). Residues 486 to 506 (GHGQPALLYIVPFTLGTFIAL) form a helical membrane-spanning segment. The short motif at 490-492 (PAL) is the PAL element. Residues 507-545 (GRKRGELRNLWTRGQPERVCTHMHMQPSPKDTNCDAVSS) are Cytoplasmic-facing.

The protein belongs to the peptidase A22B family. In terms of processing, glycosylated.

It is found in the endosome membrane. Intramembrane-cleaving aspartic protease (I-CLiP) that cleaves type II membrane signal peptides in the hydrophobic plane of the membrane. This is Signal peptide peptidase-like 4 (SPPL4) from Oryza sativa subsp. japonica (Rice).